Here is a 282-residue protein sequence, read N- to C-terminus: Transcription factor MYB1 (282 aa).

2 consecutive HTH myb-type domains span residues 9–61 (KEGL…LNYL) and 62–116 (RPDI…SKKV). 2 consecutive DNA-binding regions (H-T-H motif) follow at residues 37-61 (WRDLPRRAGLKRCGKSCRLRWLNYL) and 89-112 (WSLIAGRLPGRTDNEIKNYWNTYL). The segment at 258–282 (EDDWKQNGGKDELMGGGNGGPSSVS) is disordered. Residues 260–270 (DWKQNGGKDEL) are compositionally biased toward basic and acidic residues. Gly residues predominate over residues 271–282 (MGGGNGGPSSVS).

Its subcellular location is the nucleus. Functionally, transcription activator involved in the spatiotemporal regulation of flavonoid biosynthesis specifically in the corms of Montbretia. Activates the promoters of enzymes involved in the biosynthesis of the flavonol kaempferol and the flavonol-glycoside kaempferol-rhamnoside. The sequence is that of Transcription factor MYB1 from Crocosmia x crocosmiiflora (Montbretia).